We begin with the raw amino-acid sequence, 312 residues long: MRAEEQSKIREAAAGTIFLLIGTVCFASKSIWIKWAYQMGAEPDAVLLYRQLLAVPLFWLIFLIYRPPMPDGKKKGDLWKACGAGVFCFFLSPLLDFIGLNHVSAMVERILLMSYPLFVFGFTACRDRKMSSIQDLFAVLAVMFGLFLALGGWNAELFQANMIGAVFILLSSAVYAGYLVLSGHLVHQIGGIRLNAYGMTAAGAAMMLYTGIKSAAGMNTPMAAYPLSMYGLFAVIAVVTTVIPFVLMLEGIKRIGAQRAAAISMAGPILTIFYGALFLGERLGLIQVIGCGGVFFVITGMEYRKLKTGKKE.

A run of 10 helical transmembrane segments spans residues 13 to 33 (AAGTIFLLIGTVCFASKSIWI), 45 to 65 (AVLLYRQLLAVPLFWLIFLIY), 81 to 101 (ACGAGVFCFFLSPLLDFIGLN), 105 to 125 (AMVERILLMSYPLFVFGFTAC), 133 to 153 (IQDLFAVLAVMFGLFLALGGW), 162 to 182 (MIGAVFILLSSAVYAGYLVLS), 198 to 218 (GMTAAGAAMMLYTGIKSAAGM), 229 to 249 (MYGLFAVIAVVTTVIPFVLML), 260 to 280 (AAAISMAGPILTIFYGALFLG), and 283 to 303 (LGLIQVIGCGGVFFVITGMEY). One can recognise an EamA domain in the interval 173–303 (AVYAGYLVLS…VFFVITGMEY (131 aa)).

The protein belongs to the EamA transporter family.

It localises to the cell membrane. This is an uncharacterized protein from Bacillus subtilis (strain 168).